We begin with the raw amino-acid sequence, 570 residues long: Urease subunit alpha (570 aa).

The 440-residue stretch at 131–570 folds into the Urease domain; it reads GGMDSHIHFI…LPMAQRYFLF (440 aa). Residues histidine 136, histidine 138, and lysine 219 each contribute to the Ni(2+) site. Lysine 219 is modified (N6-carboxylysine). A substrate-binding site is contributed by histidine 221. Histidine 248 and histidine 274 together coordinate Ni(2+). The active-site Proton donor is the histidine 322. Aspartate 362 provides a ligand contact to Ni(2+).

It belongs to the metallo-dependent hydrolases superfamily. Urease alpha subunit family. In terms of assembly, heterotrimer of UreA (gamma), UreB (beta) and UreC (alpha) subunits. Three heterotrimers associate to form the active enzyme. It depends on Ni cation as a cofactor. Post-translationally, carboxylation allows a single lysine to coordinate two nickel ions.

It localises to the cytoplasm. The catalysed reaction is urea + 2 H2O + H(+) = hydrogencarbonate + 2 NH4(+). It participates in nitrogen metabolism; urea degradation; CO(2) and NH(3) from urea (urease route): step 1/1. This Rhizobium meliloti (strain 1021) (Ensifer meliloti) protein is Urease subunit alpha.